Consider the following 282-residue polypeptide: Ribosomal RNA small subunit methyltransferase I (282 aa).

Belongs to the methyltransferase superfamily. RsmI family.

The protein localises to the cytoplasm. It carries out the reaction cytidine(1402) in 16S rRNA + S-adenosyl-L-methionine = 2'-O-methylcytidine(1402) in 16S rRNA + S-adenosyl-L-homocysteine + H(+). In terms of biological role, catalyzes the 2'-O-methylation of the ribose of cytidine 1402 (C1402) in 16S rRNA. The protein is Ribosomal RNA small subunit methyltransferase I of Buchnera aphidicola subsp. Acyrthosiphon pisum (strain APS) (Acyrthosiphon pisum symbiotic bacterium).